The following is a 583-amino-acid chain: Fumarate reductase flavoprotein subunit (583 aa).

Residues 11–15, 35–37, 43–51, 155–157, and Asp-211 each bind FAD; these read GGGGA, VSK, SHTVSAEGG, and WFA. Tele-8alpha-FAD histidine is present on His-44. Active-site residues include His-232 and Arg-248. Residues 353–354, Glu-377, and 388–394 contribute to the FAD site; these read HY and RLGSNSL.

This sequence belongs to the FAD-dependent oxidoreductase 2 family. FRD/SDH subfamily. As to quaternary structure, part of an enzyme complex containing four subunits: a flavoprotein (FrdA), an iron-sulfur protein (FrdB), and two hydrophobic anchor proteins (FrdC and FrdD). FAD serves as cofactor.

Its subcellular location is the cell membrane. It carries out the reaction a quinone + succinate = fumarate + a quinol. It catalyses the reaction a menaquinone + succinate = a menaquinol + fumarate. This chain is Fumarate reductase flavoprotein subunit (frdA), found in Mycobacterium tuberculosis (strain CDC 1551 / Oshkosh).